The sequence spans 271 residues: Putative phosphoenolpyruvate synthase regulatory protein (271 aa).

An ADP-binding site is contributed by 152–159 (GVSRCGKT).

This sequence belongs to the pyruvate, phosphate/water dikinase regulatory protein family. PSRP subfamily.

The enzyme catalyses [pyruvate, water dikinase] + ADP = [pyruvate, water dikinase]-phosphate + AMP + H(+). It catalyses the reaction [pyruvate, water dikinase]-phosphate + phosphate + H(+) = [pyruvate, water dikinase] + diphosphate. Bifunctional serine/threonine kinase and phosphorylase involved in the regulation of the phosphoenolpyruvate synthase (PEPS) by catalyzing its phosphorylation/dephosphorylation. This is Putative phosphoenolpyruvate synthase regulatory protein from Legionella pneumophila (strain Paris).